Consider the following 236-residue polypeptide: 2,3,4,5-tetrahydropyridine-2,6-dicarboxylate N-acetyltransferase (236 aa).

It belongs to the transferase hexapeptide repeat family. DapH subfamily.

It carries out the reaction (S)-2,3,4,5-tetrahydrodipicolinate + acetyl-CoA + H2O = L-2-acetamido-6-oxoheptanedioate + CoA. It functions in the pathway amino-acid biosynthesis; L-lysine biosynthesis via DAP pathway; LL-2,6-diaminopimelate from (S)-tetrahydrodipicolinate (acetylase route): step 1/3. In terms of biological role, catalyzes the transfer of an acetyl group from acetyl-CoA to tetrahydrodipicolinate. This Lactobacillus acidophilus (strain ATCC 700396 / NCK56 / N2 / NCFM) protein is 2,3,4,5-tetrahydropyridine-2,6-dicarboxylate N-acetyltransferase.